Here is a 600-residue protein sequence, read N- to C-terminus: Aspartate--tRNA(Asp/Asn) ligase (600 aa).

Glu-174 serves as a coordination point for L-aspartate. An aspartate region spans residues 198 to 201 (QLFK). Position 220 (Arg-220) interacts with L-aspartate. ATP-binding positions include 220-222 (RDE) and Gln-229. His-457 contributes to the L-aspartate binding site. Glu-491 contacts ATP. Arg-498 lines the L-aspartate pocket. ATP is bound at residue 543-546 (GLDR).

Belongs to the class-II aminoacyl-tRNA synthetase family. Type 1 subfamily. As to quaternary structure, homodimer.

The protein resides in the cytoplasm. It catalyses the reaction tRNA(Asx) + L-aspartate + ATP = L-aspartyl-tRNA(Asx) + AMP + diphosphate. Aspartyl-tRNA synthetase with relaxed tRNA specificity since it is able to aspartylate not only its cognate tRNA(Asp) but also tRNA(Asn). Reaction proceeds in two steps: L-aspartate is first activated by ATP to form Asp-AMP and then transferred to the acceptor end of tRNA(Asp/Asn). The sequence is that of Aspartate--tRNA(Asp/Asn) ligase from Burkholderia vietnamiensis (strain G4 / LMG 22486) (Burkholderia cepacia (strain R1808)).